Reading from the N-terminus, the 227-residue chain is Ribonuclease 3 (227 aa).

Positions 4–133 constitute an RNase III domain; the sequence is FEKLEKLLSY…LIAAIYLDSN (130 aa). Glutamate 46 provides a ligand contact to Mg(2+). Residue aspartate 50 is part of the active site. Mg(2+) contacts are provided by asparagine 119 and glutamate 122. Residue glutamate 122 is part of the active site. Residues 158–226 form the DRBM domain; it reads DPKTALQEWA…ARSLLHRLKN (69 aa).

It belongs to the ribonuclease III family. As to quaternary structure, homodimer. It depends on Mg(2+) as a cofactor.

The protein resides in the cytoplasm. The enzyme catalyses Endonucleolytic cleavage to 5'-phosphomonoester.. Digests double-stranded RNA. Involved in the processing of primary rRNA transcript to yield the immediate precursors to the large and small rRNAs (23S and 16S). Processes some mRNAs, and tRNAs when they are encoded in the rRNA operon. Processes pre-crRNA and tracrRNA of type II CRISPR loci if present in the organism. The sequence is that of Ribonuclease 3 from Rickettsia conorii (strain ATCC VR-613 / Malish 7).